The following is a 264-amino-acid chain: H-2 class II histocompatibility antigen, E-Q beta chain (264 aa).

A signal peptide spans 1 to 26 (MVWLPRVPCVAAVILLLTVLSPPVAL). Positions 27 to 121 (VRDSRPWFLE…IFDNFLVRRR (95 aa)) are beta-1. At 27-225 (VRDSRPWFLE…KAQSTSAQNK (199 aa)) the chain is on the extracellular side. 2 disulfides stabilise this stretch: Cys-38–Cys-106 and Cys-144–Cys-200. The N-linked (GlcNAc...) asparagine glycan is linked to Asn-46. The tract at residues 122–225 (VEPTVTVYPT…KAQSTSAQNK (104 aa)) is beta-2. In terms of domain architecture, Ig-like C1-type spans 124–214 (PTVTVYPTKT…PSLTDPVTVE (91 aa)). A helical membrane pass occupies residues 226–246 (MLSGVGGFVLGLLFLGAGLFI). At 247 to 264 (YFRNQKGQSGLQPTGLLS) the chain is on the cytoplasmic side.

The protein belongs to the MHC class II family.

It is found in the membrane. In Mus musculus (Mouse), this protein is H-2 class II histocompatibility antigen, E-Q beta chain.